Here is a 339-residue protein sequence, read N- to C-terminus: DNA-directed RNA polymerase subunit alpha (339 aa).

Residues 1–233 (MVREEVAGST…DLFLPFLHAE (233 aa)) are alpha N-terminal domain (alpha-NTD). The interval 266 to 339 (GIPLNCIFID…IDLLKNKLSF (74 aa)) is alpha C-terminal domain (alpha-CTD).

This sequence belongs to the RNA polymerase alpha chain family. In plastids the minimal PEP RNA polymerase catalytic core is composed of four subunits: alpha, beta, beta', and beta''. When a (nuclear-encoded) sigma factor is associated with the core the holoenzyme is formed, which can initiate transcription.

It localises to the plastid. The protein localises to the chloroplast. It carries out the reaction RNA(n) + a ribonucleoside 5'-triphosphate = RNA(n+1) + diphosphate. Its function is as follows. DNA-dependent RNA polymerase catalyzes the transcription of DNA into RNA using the four ribonucleoside triphosphates as substrates. The sequence is that of DNA-directed RNA polymerase subunit alpha from Hordeum bulbosum (Bulbous barley).